The sequence spans 1181 residues: WD repeat-containing protein 35 (1181 aa).

5 WD repeats span residues 12-51, 69-108, 113-152, 154-193, and 502-539; these read PNNVKLKCISWNKDQGFIACGGEDGLLKVLRLETQTDDSK, GHSGAVQVVTWNEQYQKLTTSDQNGLIIVWMLYKGSWYEE, RNKSVVRSMSWNADGQKICIVYEDGAVIVGSVDGNRIWGK, LKGIQLCHVTWSADSKILLFGMANGEIHIYDNQGNFIMKM, and GTRDPICAITASDKTLIVGRESGVIQRYSFPNVALIQK.

In terms of assembly, component of the IFT complex A (IFT-A) complex. IFT-A complex is divided into a core subcomplex composed of IFT122:IFT140:WDR19 which is associated with TULP3 and a peripheral subcomplex composed of IFT43:WDR35:TTC21B. Interacts directy with IFT122, ITF43 and TTC21B. Interacts with IFT43. Interacts with CFAP61.

Its subcellular location is the cytoplasm. The protein localises to the cytoskeleton. It localises to the microtubule organizing center. The protein resides in the centrosome. It is found in the cilium axoneme. Its subcellular location is the cilium basal body. As a component of the IFT complex A (IFT-A), a complex required for retrograde ciliary transport and entry into cilia of G protein-coupled receptors (GPCRs), it is involved in ciliogenesis and ciliary protein trafficking. May promote CASP3 activation and TNF-stimulated apoptosis. The protein is WD repeat-containing protein 35 of Mus musculus (Mouse).